Here is a 157-residue protein sequence, read N- to C-terminus: Transcription elongation factor GreA (157 aa).

The stretch at 12 to 74 forms a coiled coil; that stretch reads LKKLEEELEY…TLEAMLKNAK (63 aa).

It belongs to the GreA/GreB family.

Necessary for efficient RNA polymerase transcription elongation past template-encoded arresting sites. The arresting sites in DNA have the property of trapping a certain fraction of elongating RNA polymerases that pass through, resulting in locked ternary complexes. Cleavage of the nascent transcript by cleavage factors such as GreA or GreB allows the resumption of elongation from the new 3'terminus. GreA releases sequences of 2 to 3 nucleotides. This is Transcription elongation factor GreA from Caldanaerobacter subterraneus subsp. tengcongensis (strain DSM 15242 / JCM 11007 / NBRC 100824 / MB4) (Thermoanaerobacter tengcongensis).